We begin with the raw amino-acid sequence, 326 residues long: Olfactory receptor 11H2 (326 aa).

The Extracellular portion of the chain corresponds to 1-44 (MCPLTLHVTGLMNVSEPNSSFAFVNEFILQGFSCEWTIQIFLFS). 2 N-linked (GlcNAc...) asparagine glycosylation sites follow: asparagine 13 and asparagine 18. Residues 45–65 (LFTTIYALTITGNGAIAFVLW) traverse the membrane as a helical segment. The Cytoplasmic segment spans residues 66 to 72 (CDRRLHT). The helical transmembrane segment at 73–93 (PMYMFLGNFSFLEIWYVSSTV) threads the bilayer. The Extracellular segment spans residues 94–112 (PKMLVNFLSEKKNISFAGC). N-linked (GlcNAc...) asparagine glycosylation occurs at asparagine 106. An intrachain disulfide couples cysteine 112 to cysteine 194. The helical transmembrane segment at 113 to 133 (FLQFYFFFSLGTSECLLLTVM) threads the bilayer. Residues 134–158 (AFDQYLAICRPLLYPNIMTGHLYAK) are Cytoplasmic-facing. Residues 159 to 179 (LVILCWVCGFLWFLIPIVLIS) form a helical membrane-spanning segment. Topologically, residues 180–216 (QKPFCGPNIIDHVVCDPGPLFALDCVSAPRIQLFCYT) are extracellular. Residues 217–237 (LSSLVIFGNFLFIIGSYTLVL) traverse the membrane as a helical segment. At 238–259 (KAVLGMPSSTGRHKAFSTCGSH) the chain is on the cytoplasmic side. A helical membrane pass occupies residues 260–280 (LAVVSLCYSPLMVMYVSPGLG). Topologically, residues 281–287 (HSTGMQK) are extracellular. The chain crosses the membrane as a helical span at residues 288–308 (IETLFYAMVTPLFNPLIYSLQ). Topologically, residues 309–326 (NKEIKAALRKVLGSSNII) are cytoplasmic.

This sequence belongs to the G-protein coupled receptor 1 family.

The protein localises to the cell membrane. Functionally, odorant receptor. The protein is Olfactory receptor 11H2 (OR11H2) of Homo sapiens (Human).